We begin with the raw amino-acid sequence, 132 residues long: Large ribosomal subunit protein uL14 (132 aa).

This sequence belongs to the universal ribosomal protein uL14 family. As to quaternary structure, part of the 50S ribosomal subunit. Forms a cluster with proteins L3 and L24e, part of which may contact the 16S rRNA in 2 intersubunit bridges.

Functionally, binds to 23S rRNA. Forms part of two intersubunit bridges in the 70S ribosome. In Methanobrevibacter smithii (strain ATCC 35061 / DSM 861 / OCM 144 / PS), this protein is Large ribosomal subunit protein uL14.